The following is a 327-amino-acid chain: Small ribosomal subunit protein uS4m (327 aa).

Residues 96-154 (SRLDMSIHRALFASSALQARQLVLHGKVHVNGKPERRAYRQLLPGDLVTVDQKSVMNCV) enclose the S4 RNA-binding domain. Residues 156 to 173 (ASSNNTPSIQDGKQTEQV) are compositionally biased toward polar residues. The segment at 156–199 (ASSNNTPSIQDGKQTEQVSSKDGENEKKKDNDDDLFEQTSNGKL) is disordered. A compositionally biased stretch (basic and acidic residues) spans 174 to 186 (SSKDGENEKKKDN).

It belongs to the universal ribosomal protein uS4 family. As to quaternary structure, component of the mitochondrial small ribosomal subunit (mt-SSU). Mature yeast 74S mitochondrial ribosomes consist of a small (37S) and a large (54S) subunit. The 37S small subunit contains a 15S ribosomal RNA (15S mt-rRNA) and at least 32 different proteins. The 54S large subunit contains a 21S rRNA (21S mt-rRNA) and at least 45 different proteins. uS3m, uS4m and uS5m form the narrow entry site of the mRNA channel.

It localises to the mitochondrion. Its function is as follows. Component of the mitochondrial ribosome (mitoribosome), a dedicated translation machinery responsible for the synthesis of mitochondrial genome-encoded proteins, including at least some of the essential transmembrane subunits of the mitochondrial respiratory chain. The mitoribosomes are attached to the mitochondrial inner membrane and translation products are cotranslationally integrated into the membrane. This chain is Small ribosomal subunit protein uS4m (nam9), found in Schizosaccharomyces pombe (strain 972 / ATCC 24843) (Fission yeast).